The chain runs to 84 residues: Small ribosomal subunit protein bS16 (84 aa).

Belongs to the bacterial ribosomal protein bS16 family.

In Deinococcus radiodurans (strain ATCC 13939 / DSM 20539 / JCM 16871 / CCUG 27074 / LMG 4051 / NBRC 15346 / NCIMB 9279 / VKM B-1422 / R1), this protein is Small ribosomal subunit protein bS16.